A 337-amino-acid chain; its full sequence is Fructose-1,6-bisphosphatase class 1 (337 aa).

Mg(2+) contacts are provided by E92, D114, L116, and D117. Residues 117 to 120 (DGSS), N209, and K275 contribute to the substrate site. Residue E281 coordinates Mg(2+).

It belongs to the FBPase class 1 family. Homotetramer. It depends on Mg(2+) as a cofactor.

Its subcellular location is the cytoplasm. The enzyme catalyses beta-D-fructose 1,6-bisphosphate + H2O = beta-D-fructose 6-phosphate + phosphate. It functions in the pathway carbohydrate biosynthesis; gluconeogenesis. This chain is Fructose-1,6-bisphosphatase class 1, found in Thiobacillus denitrificans (strain ATCC 25259 / T1).